The sequence spans 360 residues: D-alanine--D-alanine ligase (360 aa).

One can recognise an ATP-grasp domain in the interval 134–343 (KILAQRVGVP…YTELITRLIQ (210 aa)). Position 169-224 (169-224 (AEKLGHDMFVKPSNQGSSVGVNHVTNAEEYAAALEEAFKYDDKVLVEETVPGTEVE)) interacts with ATP. Positions 297, 310, and 312 each coordinate Mg(2+).

This sequence belongs to the D-alanine--D-alanine ligase family. Mg(2+) is required as a cofactor. Requires Mn(2+) as cofactor.

Its subcellular location is the cytoplasm. It catalyses the reaction 2 D-alanine + ATP = D-alanyl-D-alanine + ADP + phosphate + H(+). It participates in cell wall biogenesis; peptidoglycan biosynthesis. In terms of biological role, cell wall formation. The polypeptide is D-alanine--D-alanine ligase (Lactobacillus acidophilus (strain ATCC 700396 / NCK56 / N2 / NCFM)).